The following is a 573-amino-acid chain: PCNA-interacting partner (573 aa).

Residues 463–511 (VSEGAQPSVGKARLETSSENVHVDRSKDDKGPRKSTKRKLAKSKQPGVR) are disordered. Residues 474–494 (ARLETSSENVHVDRSKDDKGP) are compositionally biased toward basic and acidic residues. Positions 495–504 (RKSTKRKLAK) are enriched in basic residues.

Belongs to the PARI family. Interacts with RAD51 and PCNA. Interacts with PARP1. Interacts with TASOR. As to expression, present in testis (at protein level). Expressed in testis, gastrointestinal tract (jejunum, ileum, and colon) and immune system (thymus and spleen). Weakly expressed in lung, kidney, pituitary gland and muscle.

Its subcellular location is the cytoplasm. The protein localises to the nucleus. Required to suppress inappropriate homologous recombination, thereby playing a central role DNA repair and in the maintenance of genomic stability. Antagonizes homologous recombination by interfering with the formation of the RAD51-DNA homologous recombination structure. Positively regulate the poly(ADP-ribosyl)ation activity of PARP1; however such function may be indirect. Binds single-strand DNA and poly(A) homopolymers. The protein is PCNA-interacting partner (Parpbp) of Rattus norvegicus (Rat).